The chain runs to 122 residues: Ribosomal protein eL22-like 1 (122 aa).

S112, S118, and S120 each carry phosphoserine.

This sequence belongs to the eukaryotic ribosomal protein eL22 family.

This is Ribosomal protein eL22-like 1 (Rpl22l1) from Mus musculus (Mouse).